We begin with the raw amino-acid sequence, 294 residues long: Foldase protein PrsA 1 (294 aa).

A signal peptide spans 1–21 (MTKLKKVMISVIAATLLLLAG). Cysteine 22 carries the N-palmitoyl cysteine lipid modification. Cysteine 22 carries S-diacylglycerol cysteine lipidation. One can recognise a PpiC domain in the interval 135 to 226 (EPDITVRHIL…YGYHLIQLVK (92 aa)).

It belongs to the PrsA family.

The protein resides in the cell membrane. It catalyses the reaction [protein]-peptidylproline (omega=180) = [protein]-peptidylproline (omega=0). In terms of biological role, plays a major role in protein secretion by helping the post-translocational extracellular folding of several secreted proteins. This chain is Foldase protein PrsA 1, found in Listeria monocytogenes serotype 4b (strain F2365).